The sequence spans 28 residues: Ornatin-D (28 aa).

The protein belongs to the ornatin family.

It is found in the secreted. Potent inhibitor of fibrinogen interaction with platelet receptors expressed on glycoprotein IIb-IIIa complex. May prevent blood from clotting during either feeding and/or storage of ingested blood. In Placobdella ornata (Turtle leech), this protein is Ornatin-D.